Reading from the N-terminus, the 310-residue chain is Flavin-dependent trigonelline monooxygenase, reductase component (310 aa).

FMN contacts are provided by residues 40–43 (TANS), 57–63 (SIAKTSS), 90–91 (FA), and R97.

The protein belongs to the non-flavoprotein flavin reductase family. Homodimer. The trigonelline monooxygenase is composed of a reductase component TgnA and an oxygenase component TgnB.

The enzyme catalyses a reduced flavin + NAD(+) = an oxidized flavin + NADH + 2 H(+). It catalyses the reaction FADH2 + NAD(+) = FAD + NADH + 2 H(+). The catalysed reaction is FMNH2 + NAD(+) = FMN + NADH + 2 H(+). Its activity is regulated as follows. Maximal reductase activity is achieved only upon trigonelline (TG) binding to the reductase component before interaction with NADH. It seems that TgnA undergoes an allosteric transition upon trigonelline (TG) binding accounting for the positive cooperativity toward NADH oxidation. Its function is as follows. Involved in the degradation of the pyridine ring of trigonelline (TG; N-methylnicotinate) into succinate and methylamine as carbon and nitrogen sources, respectively. TgnA catalyzes the reduction of flavin (FMN or FAD) by NADH and supplies the reduced flavin to the oxygenase component TgnB. The sequence is that of Flavin-dependent trigonelline monooxygenase, reductase component from Acinetobacter baylyi (strain ATCC 33305 / BD413 / ADP1).